We begin with the raw amino-acid sequence, 147 residues long: Fluoride-specific ion channel FluC 1 (147 aa).

4 consecutive transmembrane segments (helical) span residues 29 to 49 (YVYI…ISFL), 61 to 81 (IANL…IAFF), 90 to 110 (AITT…LELI), and 118 to 138 (FITL…LCYV). Residues Gly97 and Thr100 each coordinate Na(+).

It belongs to the fluoride channel Fluc/FEX (TC 1.A.43) family.

It localises to the cell membrane. It catalyses the reaction fluoride(in) = fluoride(out). Its activity is regulated as follows. Na(+) is not transported, but it plays an essential structural role and its presence is essential for fluoride channel function. Its function is as follows. Fluoride-specific ion channel. Important for reducing fluoride concentration in the cell, thus reducing its toxicity. This chain is Fluoride-specific ion channel FluC 1, found in Staphylococcus aureus (strain Mu50 / ATCC 700699).